A 438-amino-acid polypeptide reads, in one-letter code: Dihydroorotase (438 aa).

Zn(2+) is bound by residues His-58 and His-60. Substrate contacts are provided by residues 60-62 (HLR) and Asn-92. The Zn(2+) site is built by Asp-152, His-179, and His-232. Asn-278 contacts substrate. Residue Asp-305 participates in Zn(2+) binding. Residue Asp-305 is part of the active site. Substrate-binding positions include His-309 and 323–324 (FG).

This sequence belongs to the metallo-dependent hydrolases superfamily. DHOase family. Class I DHOase subfamily. Zn(2+) serves as cofactor.

It catalyses the reaction (S)-dihydroorotate + H2O = N-carbamoyl-L-aspartate + H(+). The protein operates within pyrimidine metabolism; UMP biosynthesis via de novo pathway; (S)-dihydroorotate from bicarbonate: step 3/3. Catalyzes the reversible cyclization of carbamoyl aspartate to dihydroorotate. This is Dihydroorotase from Leifsonia xyli subsp. xyli (strain CTCB07).